We begin with the raw amino-acid sequence, 708 residues long: Polyribonucleotide nucleotidyltransferase (708 aa).

Mg(2+)-binding residues include Asp-485 and Asp-491. Residues 552–611 (PKTYIMSIPPDKIRDVIGSGGKVINKIIAETGVKIDIKEDGKIFVMSEDSEGAKKALKII) form the KH domain. The 69-residue stretch at 621-689 (GEIYLGKVTK…NQGRINLSRK (69 aa)) folds into the S1 motif domain. The interval 689–708 (KDAIKDSEKKEQNEKDVQKK) is disordered.

This sequence belongs to the polyribonucleotide nucleotidyltransferase family. The cofactor is Mg(2+).

The protein localises to the cytoplasm. It carries out the reaction RNA(n+1) + phosphate = RNA(n) + a ribonucleoside 5'-diphosphate. Its function is as follows. Involved in mRNA degradation. Catalyzes the phosphorolysis of single-stranded polyribonucleotides processively in the 3'- to 5'-direction. The sequence is that of Polyribonucleotide nucleotidyltransferase from Clostridium kluyveri (strain NBRC 12016).